We begin with the raw amino-acid sequence, 141 residues long: Cystatin (141 aa).

Residues 1 to 26 (MVHSQLPVAASLRLLCALLLLPSATM) form the signal peptide. One can recognise a Cystatin domain in the interval 29 to 129 (GGLSPRSVTD…CRFQVWSRPW (101 aa)). The Secondary area of contact signature appears at 73-77 (QVVAG). 2 disulfide bridges follow: Cys91–Cys107 and Cys120–Cys140.

This sequence belongs to the cystatin family. As to expression, expressed by the venom gland at an extremely low level (at protein level).

The protein localises to the secreted. In terms of biological role, inhibits various C1 cysteine proteases including cathepsin L, papain and cathepsin B. This protein has no toxic activity and its function in the venom is unknown. It may play a role as a housekeeping or regulatory protein. In Cryptophis nigrescens (Eastern small-eyed snake), this protein is Cystatin.